Here is a 392-residue protein sequence, read N- to C-terminus: Formate-dependent phosphoribosylglycinamide formyltransferase (392 aa).

N(1)-(5-phospho-beta-D-ribosyl)glycinamide is bound by residues 22–23 (EL) and Glu-82. Residues Arg-114, Lys-155, 160–165 (SSGKGQ), 195–198 (EGVV), and Glu-203 contribute to the ATP site. The region spanning 119-308 (RLAAEELGLP…EFALHVRAFL (190 aa)) is the ATP-grasp domain. Glu-267 and Glu-279 together coordinate Mg(2+). N(1)-(5-phospho-beta-D-ribosyl)glycinamide is bound by residues Asp-286, Lys-355, and 362–363 (RR).

The protein belongs to the PurK/PurT family. In terms of assembly, homodimer.

The catalysed reaction is N(1)-(5-phospho-beta-D-ribosyl)glycinamide + formate + ATP = N(2)-formyl-N(1)-(5-phospho-beta-D-ribosyl)glycinamide + ADP + phosphate + H(+). It functions in the pathway purine metabolism; IMP biosynthesis via de novo pathway; N(2)-formyl-N(1)-(5-phospho-D-ribosyl)glycinamide from N(1)-(5-phospho-D-ribosyl)glycinamide (formate route): step 1/1. Its function is as follows. Involved in the de novo purine biosynthesis. Catalyzes the transfer of formate to 5-phospho-ribosyl-glycinamide (GAR), producing 5-phospho-ribosyl-N-formylglycinamide (FGAR). Formate is provided by PurU via hydrolysis of 10-formyl-tetrahydrofolate. In Salmonella paratyphi A (strain ATCC 9150 / SARB42), this protein is Formate-dependent phosphoribosylglycinamide formyltransferase.